A 1028-amino-acid chain; its full sequence is MGILSVIRIFIYCLIRLFSFNSRKRNSSIDELERGEINAFACDKQNTPSPNSECRPLTPLNSPFRRTVEGDTANLQAPSPTACPSFDSASSIKSSKEDIACRKLSTERFFYSPNGIDEMKKQQQFKKIPTVSITEVEPAFIPSNMEQALFSEEPFVIQDDLSHQINLDDNRKFSRIQKNKLDPLITVNLVPIVNGENCFNFYETQMETNFLSPEFIKKPSMVDHKRDSEINAVTAVSADGSFSPLTETLSSTISTLSNDSLDGLSSQKNEFTGFNSNSEWIPNDTVDYICNSDASSVVSNLSDFEDCFDQFGVYDKEYEKKIEKTKRNFPKFQSSATYPPFSAHHQARRNNPQGFRNVKKRFQLFKDDCTALTDSDFLDALPFFNARVIIALYVEWRLRVYETMIIKGEESLKNLQRARDGPHNKLWLGVFGNKDTIKKLSNYDRRAISNPYVSNHLNFNVRRVKSDTVYIPTILQLLRSSTQLMTEQAFVASSNLKSTKGLRETRLIQKYKVKGDFEYVYAALYYAAFTQESTLKAVTIDDILSEDELEDWWYLNLRYTSFITPQLCFEFLDKEADSCRDRLTEVKSEPPKAVIYEEPLNKLSRFSSDRLFTSHELVAIAELISLNEPPLESGKKFYYEEFQKACQKKRDDYRYSPEIEFKAAFREKFLQSNEKVPFPRPGEIYEKRCDYFSKYACQNIFISKPLKRSGSIYEVFSDGIGRVIYGSVLDYEATRNNILLHFGFEIHCAPSEEELIEREEAFKDFHNMLSFKYSANEIYEFCGTHSRAEVHKNEVLKRMAYYLIDENKEISILRRILSLRIVEPTTSFTRYEYDLWRTFYPDVLYLNYSKSGRIPTGSPYIMNGQWRKDLCVSTPPMVDINSALFPHWFKLSASNLFAGAEHAGLNRQKPDKIDLDLYEPLPENSYLVAAELRVLRALRHKNPENIPLLEKWEVRALHQLMAKIRKYYTVPTDYLSLRMDGLQAMLRKREYMSCYTFNYFDYACLMDHAYRLYEGFNNQVVNLPPRIM.

It is found in the prospore membrane. Functionally, has a role in spore morphogenesis. Involved in the assembly of the forespore membrane. This Schizosaccharomyces pombe (strain 972 / ATCC 24843) (Fission yeast) protein is Sporulation-specific protein 3 (spo3).